We begin with the raw amino-acid sequence, 691 residues long: Transcription termination factor Rho (691 aa).

The disordered stretch occupies residues 48–303; the sequence is ISDHQRGGSV…PEVDETELTE (256 aa). Residues 50–64 show a composition bias toward basic and acidic residues; it reads DHQRGGSVADRDAAE. Low complexity-rich tracts occupy residues 65 to 92 and 105 to 119; these read RAAQ…PAAE and DTSA…QPQA. Composition is skewed to basic and acidic residues over residues 120–158 and 188–273; these read EARE…SERR and DADR…EGGR. The 84-residue stretch at 307 to 390 folds into the Rho RNA-BD domain; sequence LQPVAGILDV…VKISSVNGQP (84 aa). Residues 433 to 438, 445 to 450, and R476 contribute to the ATP site; these read GKGQRG and KAGKTM.

Belongs to the Rho family. Homohexamer. The homohexamer assembles into an open ring structure.

Facilitates transcription termination by a mechanism that involves Rho binding to the nascent RNA, activation of Rho's RNA-dependent ATPase activity, and release of the mRNA from the DNA template. This is Transcription termination factor Rho from Micrococcus luteus (Micrococcus lysodeikticus).